Here is a 544-residue protein sequence, read N- to C-terminus: Lysophosphatidylcholine acyltransferase 2 (544 aa).

Residues 1–58 are Cytoplasmic-facing; it reads MNRCAEAAAVAATVPGSGVGDAGLRPPMVPRQASFFPPPVPNPFVQQTTISASRRLQM. A helical; Signal-anchor for type II membrane protein membrane pass occupies residues 59-79; it reads FLLGIILLPVRALLVGIILLL. The Lumenal segment spans residues 80 to 544; it reads AWPFAVISTA…EEGTSDKKVD (465 aa). An HXXXXD motif motif is present at residues 146 to 151; the sequence is HSTFFD. The EGTC motif signature appears at 220 to 223; that stretch reads EGTC. EF-hand domains follow at residues 391 to 426 and 428 to 463; these read PVSD…LCNP and NTEE…SLGV. Residues Asp-404, Asn-406, Asp-408, Ser-410, Glu-415, Asp-441, Asp-443, Asp-445, Tyr-447, and Glu-452 each contribute to the Ca(2+) site. A compositionally biased stretch (polar residues) spans 520 to 532; sequence TAPSVASNKVSPE. A disordered region spans residues 520-544; that stretch reads TAPSVASNKVSPESQEEGTSDKKVD.

The protein belongs to the 1-acyl-sn-glycerol-3-phosphate acyltransferase family. In terms of tissue distribution, highest expression is found in resident macrophages and casein-induced neutrophils followed by skin, colon, spleen and thioglycollate-induced macrophages. Detected in erythroleukemic cells but not in reticulocytes.

It localises to the endoplasmic reticulum membrane. Its subcellular location is the golgi apparatus membrane. The protein localises to the cell membrane. The protein resides in the lipid droplet. The catalysed reaction is a 1-acyl-sn-glycero-3-phosphocholine + an acyl-CoA = a 1,2-diacyl-sn-glycero-3-phosphocholine + CoA. It catalyses the reaction a 1-O-alkyl-sn-glycero-3-phosphocholine + acetyl-CoA = a 1-O-alkyl-2-acetyl-sn-glycero-3-phosphocholine + CoA. It carries out the reaction a 1-acyl-sn-glycero-3-phosphate + an acyl-CoA = a 1,2-diacyl-sn-glycero-3-phosphate + CoA. The enzyme catalyses a 1-O-(1Z-alkenyl)-sn-glycero-3-phosphocholine + an acyl-CoA = a 1-O-(1Z-alkenyl)-2-acyl-sn-glycero-3-phosphocholine + CoA. The catalysed reaction is 1-O-octadecyl-sn-glycero-3-phosphocholine + acetyl-CoA = 1-O-octadecyl-2-acetyl-sn-glycero-3-phosphocholine + CoA. It catalyses the reaction 1-hexadecanoyl-sn-glycero-3-phosphocholine + acetyl-CoA = 1-hexadecanoyl-2-acetyl-sn-glycero-3-phosphocholine + CoA. It carries out the reaction 1-octadecanoyl-sn-glycero-3-phosphocholine + acetyl-CoA = 1-octadecanoyl-2-acetyl-sn-glycero-3-phosphocholine + CoA. The enzyme catalyses a 1-O-(1Z-alkenyl)-sn-glycero-3-phosphocholine + acetyl-CoA = 1-O-(1Z)-alkenyl-2-acetyl-sn-glycero-3-phosphocholine + CoA. The catalysed reaction is 1-O-hexadecyl-sn-glycero-3-phosphocholine + acetyl-CoA = 1-O-hexadecyl-2-acetyl-sn-glycero-3-phosphocholine + CoA. It catalyses the reaction 1-O-octadecyl-sn-glycero-3-phosphocholine + (5Z,8Z,11Z,14Z)-eicosatetraenoyl-CoA = 1-O-octadecyl-2-(5Z,8Z,11Z,14Z)-eicosatetraenoyl-sn-glycero-3-phosphocholine + CoA. It carries out the reaction 1-hexadecanoyl-sn-glycero-3-phosphate + (9Z)-octadecenoyl-CoA = 1-hexadecanoyl-2-(9Z-octadecenoyl)-sn-glycero-3-phosphate + CoA. The enzyme catalyses 1-(9Z-octadecenoyl)-sn-glycero-3-phosphate + (9Z)-octadecenoyl-CoA = 1,2-di-(9Z-octadecenoyl)-sn-glycero-3-phosphate + CoA. The catalysed reaction is 1-(9Z-octadecenoyl)-sn-glycero-3-phosphate + hexadecanoyl-CoA = 1-(9Z)-octadecenoyl-2-hexadecanoyl-sn-glycero-3-phosphate + CoA. It catalyses the reaction 1-heptadecanoyl-sn-glycero-3-phosphate + (9Z)-octadecenoyl-CoA = 1-heptadecanoyl-2-(9Z)-octadecenoyl-sn-glycero-3-phosphate + CoA. It carries out the reaction 1-octadecanoyl-sn-glycero-3-phosphate + (9Z)-octadecenoyl-CoA = 1-octadecanoyl-2-(9Z-octadecenoyl)-sn-glycero-3-phosphate + CoA. The enzyme catalyses heptadecanoyl-CoA + 1-(9Z-octadecenoyl)-sn-glycero-3-phosphate = 1-(9Z)-octadecenoyl-2-heptadecanoyl-sn-glycero-3-phosphate + CoA. The catalysed reaction is 1-(9Z-octadecenoyl)-sn-glycero-3-phosphate + (9Z,12Z)-octadecadienoyl-CoA = 1-(9Z)-octadecenoyl-2-(9Z,12Z)-octadecadienoyl-sn-glycero-3-phosphate + CoA. It catalyses the reaction 1-(9Z-octadecenoyl)-sn-glycero-3-phosphate + tetradecanoyl-CoA = 1-(9Z)-octadecenoyl-2-tetradecanoyl-sn-glycero-3-phosphate + CoA. It carries out the reaction pentadecanoyl-CoA + 1-(9Z-octadecenoyl)-sn-glycero-3-phosphate = 1-(9Z)-octadecenoyl-2-pentadecanoyl-sn-glycero-3-phosphate + CoA. The enzyme catalyses nonadecanoyl-CoA + 1-(9Z-octadecenoyl)-sn-glycero-3-phosphate = 1-(9Z)-octadecenoyl-2-nonadecanoyl-sn-glycero-3-phosphate + CoA. The catalysed reaction is 1-hexadecanoyl-sn-glycero-3-phosphocholine + (9Z)-octadecenoyl-CoA = 1-hexadecanoyl-2-(9Z-octadecenoyl)-sn-glycero-3-phosphocholine + CoA. Its pathway is lipid metabolism; phospholipid metabolism. Acetyltransferase activity is increased following acute inflammatory stimulation by lipopolysaccharide (LPS). Acyltransferase activity is unchanged. Exhibits both acyltransferase and acetyltransferase activities. Activity is calcium-dependent. Catalyzes the conversion of lysophosphatidylcholine (1-acyl-sn-glycero-3-phosphocholine or LPC) into phosphatidylcholine (1,2-diacyl-sn-glycero-3-phosphocholine or PC). Catalyzes the conversion 1-acyl-sn-glycerol-3-phosphate (lysophosphatidic acid or LPA) into 1,2-diacyl-sn-glycerol-3-phosphate (phosphatidic acid or PA) by incorporating an acyl moiety at the sn-2 position of the glycerol backbone. Involved in platelet-activating factor (PAF) biosynthesis by catalyzing the conversion of the PAF precursor, 1-O-alkyl-sn-glycero-3-phosphocholine (lyso-PAF) into 1-O-alkyl-2-acetyl-sn-glycero-3-phosphocholine (PAF). Also converts lyso-PAF to 1-O-alkyl-2-acyl-sn-glycero-3-phosphocholine (PC), a major component of cell membranes and a PAF precursor. Under resting conditions, acyltransferase activity is preferred. Upon acute inflammatory stimulus, acetyltransferase activity is enhanced and PAF synthesis increases. Involved in the regulation of lipid droplet number and size. This Mus musculus (Mouse) protein is Lysophosphatidylcholine acyltransferase 2 (Lpcat2).